Here is a 465-residue protein sequence, read N- to C-terminus: Adenosylhomocysteinase (465 aa).

3 residues coordinate substrate: threonine 56, aspartate 131, and glutamate 191. NAD(+) is bound at residue 192-194 (TTT). 2 residues coordinate substrate: lysine 221 and aspartate 225. NAD(+)-binding positions include asparagine 226, 255–260 (GYGDVG), glutamate 278, asparagine 313, 334–336 (IGH), and asparagine 379.

The protein belongs to the adenosylhomocysteinase family. NAD(+) is required as a cofactor.

The protein resides in the cytoplasm. It catalyses the reaction S-adenosyl-L-homocysteine + H2O = L-homocysteine + adenosine. Its pathway is amino-acid biosynthesis; L-homocysteine biosynthesis; L-homocysteine from S-adenosyl-L-homocysteine: step 1/1. Functionally, may play a key role in the regulation of the intracellular concentration of adenosylhomocysteine. The protein is Adenosylhomocysteinase of Bartonella henselae (strain ATCC 49882 / DSM 28221 / CCUG 30454 / Houston 1) (Rochalimaea henselae).